The sequence spans 260 residues: HLA class II histocompatibility antigen, DP alpha 1 chain (260 aa).

Residues 1 to 28 (MRPEDRMFHIRAVILRALSLAFLLSLRG) form the signal peptide. Positions 29-115 (AGAIKADHVS…QRSNHTQATN (87 aa)) are alpha-1. Residues 29–222 (AGAIKADHVS…EPIQMPETTE (194 aa)) are Extracellular-facing. Residues Asn109 and Asn149 are each glycosylated (N-linked (GlcNAc...) asparagine). The segment at 116-209 (DPPEVTVFPK…GLDQPLLKHW (94 aa)) is alpha-2. Residues 118 to 210 (PEVTVFPKEP…LDQPLLKHWE (93 aa)) enclose the Ig-like C1-type domain. Cys138 and Cys194 are disulfide-bonded. Residues 210-222 (EAQEPIQMPETTE) form a connecting peptide region. The helical transmembrane segment at 223 to 245 (TVLCALGLVLGLVGIIVGTVLII) threads the bilayer. Topologically, residues 246 to 260 (KSLRSGHDPRAQGTL) are cytoplasmic.

The protein belongs to the MHC class II family. Heterodimer of an alpha and a beta subunit; also referred as MHC class II molecule. In the endoplasmic reticulum (ER) it forms a heterononamer; 3 MHC class II molecules bind to a CD74 homotrimer (also known as invariant chain or HLA class II histocompatibility antigen gamma chain). In the endosomal/lysosomal system; CD74 undergoes sequential degradation by various proteases; leaving a small fragment termed CLIP on each MHC class II molecule. MHC class II molecule interacts with HLA_DM, and HLA_DO in B-cells, in order to release CLIP and facilitate the binding of antigenic peptides.

The protein resides in the cell membrane. It is found in the endoplasmic reticulum membrane. It localises to the golgi apparatus. Its subcellular location is the trans-Golgi network membrane. The protein localises to the endosome membrane. The protein resides in the lysosome membrane. Functionally, binds peptides derived from antigens that access the endocytic route of antigen presenting cells (APC) and presents them on the cell surface for recognition by the CD4 T-cells. The peptide binding cleft accommodates peptides of 10-30 residues. The peptides presented by MHC class II molecules are generated mostly by degradation of proteins that access the endocytic route, where they are processed by lysosomal proteases and other hydrolases. Exogenous antigens that have been endocytosed by the APC are thus readily available for presentation via MHC II molecules, and for this reason this antigen presentation pathway is usually referred to as exogenous. As membrane proteins on their way to degradation in lysosomes as part of their normal turn-over are also contained in the endosomal/lysosomal compartments, exogenous antigens must compete with those derived from endogenous components. Autophagy is also a source of endogenous peptides, autophagosomes constitutively fuse with MHC class II loading compartments. In addition to APCs, other cells of the gastrointestinal tract, such as epithelial cells, express MHC class II molecules and CD74 and act as APCs, which is an unusual trait of the GI tract. To produce a MHC class II molecule that presents an antigen, three MHC class II molecules (heterodimers of an alpha and a beta chain) associate with a CD74 trimer in the ER to form a heterononamer. Soon after the entry of this complex into the endosomal/lysosomal system where antigen processing occurs, CD74 undergoes a sequential degradation by various proteases, including CTSS and CTSL, leaving a small fragment termed CLIP (class-II-associated invariant chain peptide). The removal of CLIP is facilitated by HLA-DM via direct binding to the alpha-beta-CLIP complex so that CLIP is released. HLA-DM stabilizes MHC class II molecules until primary high affinity antigenic peptides are bound. The MHC II molecule bound to a peptide is then transported to the cell membrane surface. In B-cells, the interaction between HLA-DM and MHC class II molecules is regulated by HLA-DO. Primary dendritic cells (DCs) also to express HLA-DO. Lysosomal microenvironment has been implicated in the regulation of antigen loading into MHC II molecules, increased acidification produces increased proteolysis and efficient peptide loading. The sequence is that of HLA class II histocompatibility antigen, DP alpha 1 chain (HLA-DPA1) from Homo sapiens (Human).